A 159-amino-acid polypeptide reads, in one-letter code: Antitoxin Xre (159 aa).

The protein belongs to the MbcA/ParS/Xre antitoxin family. Homodimer. Forms a complex with cognate toxin Res; the 2 toxin molecules dimerize and each contacts an Xre homodimer. Most Res-Xre contacts are between the antitoxin molecule closest to the toxin.

Its function is as follows. Probable antitoxin component of a type II toxin-antitoxin (TA) system. In vivo probably neutralizes the toxic effect of cognate toxin Res. The polypeptide is Antitoxin Xre (Pseudomonas putida (strain ATCC 47054 / DSM 6125 / CFBP 8728 / NCIMB 11950 / KT2440)).